Here is a 613-residue protein sequence, read N- to C-terminus: MPDYEKVIEASGNGRYSKLNTVLGKGAYKVVYKAIDREEAINDNEITNVKVTRQEFKDLGHEIDILKSVRHPNIITFHDAWYNETEFVFITELMTSGTLREYIRKLTPLPNIKIVKRWCRQILKGLAYLHGHEPPIIHRDIKCDNIFINGAHGEIKIGDMGTAEMKNGKKYTVIGTPEFMAPEMYEEQGYNEKVDIYAFGMCLLEMATGEYPYGECTNAVQVFKKVTQTIKPECLSRVQDPELLTLVNICLTPEDERMTAQEILEHRFLAVEPEVVLVSKDMTMKLLTLQVVFKGMDKLSVKFEFNADTDTAADVVAEMIEEQVLQNCYQQLITCEINRILRDIARNQGPPDKGEDEKIVWRRENDIRSELERAKKDLALAVERVFEAEKKCELLEQHNIIAEERCKETIFALEQAKFQIPDLLQPQPQPQPQPQPQPQPQPQFQLQPQLQYLSPQSTTSPGPTSDDNSTNSTMLSSLESELSKLCVSGDEQVETTTHSALMENVLAGKAKYYEYSNDTSIDKFVMDTAGATNRSKDKQKQWAAKLQDQDIMTVGDLRDLHDEDWSGIGLTVFALRALKNMLAGKKAAVTQRGLQGTRSGASTPVEEQEQELM.

A Protein kinase domain is found at 17-269; sequence SKLNTVLGKG…AQEILEHRFL (253 aa). ATP-binding positions include 23–31 and Lys-50; that span reads LGKGAYKVV. The active-site Proton acceptor is Asp-140. 2 disordered regions span residues 424–475 and 589–613; these read LQPQ…STML and VTQRGLQGTRSGASTPVEEQEQELM. The span at 427-441 shows a compositional bias: pro residues; it reads QPQPQPQPQPQPQPQ. Residues 442–475 are compositionally biased toward low complexity; that stretch reads PQFQLQPQLQYLSPQSTTSPGPTSDDNSTNSTML. Residues 592-602 show a composition bias toward polar residues; the sequence is RGLQGTRSGAS.

Belongs to the protein kinase superfamily. Ser/Thr protein kinase family.

It catalyses the reaction L-seryl-[protein] + ATP = O-phospho-L-seryl-[protein] + ADP + H(+). The enzyme catalyses L-threonyl-[protein] + ATP = O-phospho-L-threonyl-[protein] + ADP + H(+). In terms of biological role, serine/threonine protein kinase that probably participates as an intermediate in an intracellular system controlling nuclear proliferation. This chain is Serine/threonine-protein kinase pkpA (pkpA), found in Phycomyces blakesleeanus (strain ATCC 8743b / DSM 1359 / FGSC 10004 / NBRC 33097 / NRRL 1555).